Here is a 325-residue protein sequence, read N- to C-terminus: Ribosomal RNA small subunit methyltransferase H (325 aa).

S-adenosyl-L-methionine is bound by residues 45–47 (GGH), Asp-65, Tyr-92, Asp-113, and Gln-120.

It belongs to the methyltransferase superfamily. RsmH family.

It is found in the cytoplasm. It carries out the reaction cytidine(1402) in 16S rRNA + S-adenosyl-L-methionine = N(4)-methylcytidine(1402) in 16S rRNA + S-adenosyl-L-homocysteine + H(+). Functionally, specifically methylates the N4 position of cytidine in position 1402 (C1402) of 16S rRNA. This chain is Ribosomal RNA small subunit methyltransferase H, found in Oleidesulfovibrio alaskensis (strain ATCC BAA-1058 / DSM 17464 / G20) (Desulfovibrio alaskensis).